We begin with the raw amino-acid sequence, 314 residues long: Olfactory receptor 14K1 (314 aa).

Residues 1–23 (MTNQTQMMEFLLVRFTENWVLLR) are Extracellular-facing. N-linked (GlcNAc...) asparagine glycosylation is present at Asn3. The helical transmembrane segment at 24–44 (LHALLFSLIYLTAVLMNLVII) threads the bilayer. The Cytoplasmic segment spans residues 45–52 (LLMILDHR). Residues 53–73 (LHMAMYFFLRHLSFLDLCLIS) traverse the membrane as a helical segment. Residues 74-97 (ATVPKSILNSVASTDSISFLGCVL) lie on the Extracellular side of the membrane. Cys95 and Cys187 are joined by a disulfide. Residues 98–118 (QLFLVVLLAGSEIGILTAMSY) form a helical membrane-spanning segment. At 119-131 (DRYAAICCPLHCE) the chain is on the cytoplasmic side. A helical membrane pass occupies residues 132 to 152 (AVMSRGLCVQLMALSWLNRGA). Residues 153-194 (LGLLYTAGTFSLNFYGSDELHQFFCDVPALLKLTCSKEHAII) are Extracellular-facing. A helical transmembrane segment spans residues 195-215 (SVSVAIGVCYAFSCLVCIVVS). Topologically, residues 216 to 235 (YVYIFSAVLRISQRQRQSKA) are cytoplasmic. Residues 236-256 (FSNCVPHLIVVTVFLVTGAVA) traverse the membrane as a helical segment. The Extracellular portion of the chain corresponds to 257–269 (YLKPGSDAPSILD). A helical transmembrane segment spans residues 270–290 (LLVSVFYSVAPPTLNPVIYCL). The Cytoplasmic segment spans residues 291–314 (KNKDIKSALSKVLWNVRSSGVMKR).

Belongs to the G-protein coupled receptor 1 family.

Its subcellular location is the cell membrane. In terms of biological role, odorant receptor. This chain is Olfactory receptor 14K1 (OR14K1), found in Homo sapiens (Human).